The chain runs to 209 residues: Probable GTP-binding protein EngB (209 aa).

Positions 27-201 (SGVEIAFAGR…ATKLDSWFAE (175 aa)) constitute an EngB-type G domain. GTP-binding positions include 35–42 (GRSNAGKS), 62–66 (GRTQL), 80–83 (DLPG), 147–150 (TKAD), and 180–182 (YSA). Mg(2+) is bound by residues Ser-42 and Thr-64.

The protein belongs to the TRAFAC class TrmE-Era-EngA-EngB-Septin-like GTPase superfamily. EngB GTPase family. Requires Mg(2+) as cofactor.

Necessary for normal cell division and for the maintenance of normal septation. The sequence is that of Probable GTP-binding protein EngB from Glaesserella parasuis serovar 5 (strain SH0165) (Haemophilus parasuis).